Consider the following 100-residue polypeptide: Large ribosomal subunit protein uL23 (100 aa).

Belongs to the universal ribosomal protein uL23 family. As to quaternary structure, part of the 50S ribosomal subunit. Contacts protein L29, and trigger factor when it is bound to the ribosome.

One of the early assembly proteins it binds 23S rRNA. One of the proteins that surrounds the polypeptide exit tunnel on the outside of the ribosome. Forms the main docking site for trigger factor binding to the ribosome. This is Large ribosomal subunit protein uL23 from Synechococcus sp. (strain CC9902).